Consider the following 67-residue polypeptide: Alpha-conotoxin G1.5 (67 aa).

An N-terminal signal peptide occupies residues 1–21 (MGMRMMFTVFLLVALATTVVS). Residues 22–47 (FTSDRASDRRNAAVKAFDLISSTVKK) constitute a propeptide that is removed on maturation. 2 disulfides stabilise this stretch: Cys-49/Cys-55 and Cys-50/Cys-63. A Glutamine amide modification is found at Gln-65.

The protein belongs to the conotoxin A superfamily. In terms of tissue distribution, expressed by the venom duct.

Its subcellular location is the secreted. In terms of biological role, alpha-conotoxins act on postsynaptic membranes, they bind to the nicotinic acetylcholine receptors (nAChR) and thus inhibit them. Globular isomer (C1-C3; C2-C4) selectively inhibits neuronal (non-muscle) nAChR subtypes particularly human alpha-3-beta-2/CHRNA3-CHRNB2 (IC(50)=35.7 nM) and alpha-9-alpha-10/CHRNA9-CHRNA10 nAChRs (IC(50)=569 nM), while the ribbon isomer (C1-C4; C2-C3) shows weak inhibition on alpha-3-beta-2/CHRNA3-CHRNB2, but not on all other receptors tested. The protein is Alpha-conotoxin G1.5 of Conus geographus (Geography cone).